Consider the following 163-residue polypeptide: Myosin light chain 2 (163 aa).

EF-hand domains are found at residues D15–T50 and P92–E127. The Ca(2+) site is built by D28, D30, D32, and D39.

In terms of assembly, interacts with the IQ domain of MYO1.

The protein resides in the bud neck. In terms of biological role, regulatory light chain for the class II conventional myosin MYO1. May play a role in the disassembly of the MYO1 ring at the bud neck at the end of its contraction during cytokinesis. The chain is Myosin light chain 2 (MLC2) from Saccharomyces cerevisiae (strain ATCC 204508 / S288c) (Baker's yeast).